Here is a 233-residue protein sequence, read N- to C-terminus: Large ribosomal subunit protein uL1 (233 aa).

Belongs to the universal ribosomal protein uL1 family. Part of the 50S ribosomal subunit.

In terms of biological role, binds directly to 23S rRNA. The L1 stalk is quite mobile in the ribosome, and is involved in E site tRNA release. Protein L1 is also a translational repressor protein, it controls the translation of the L11 operon by binding to its mRNA. The sequence is that of Large ribosomal subunit protein uL1 from Thermotoga maritima (strain ATCC 43589 / DSM 3109 / JCM 10099 / NBRC 100826 / MSB8).